Here is a 411-residue protein sequence, read N- to C-terminus: Ornithine cyclodeaminase (411 aa).

The NAD(+) site is built by Asn236, Ala237, Asp315, Thr347, Met348, Leu349, His350, Asp368, Asp391, and Val392.

The protein belongs to the AgrE/ArgZ ornithine cyclodeaminase family. Requires NAD(+) as cofactor.

It carries out the reaction L-ornithine = L-proline + NH4(+). Catalyzes the conversion of ornithine to proline, with the release of ammonia. This is Ornithine cyclodeaminase from Methanothermobacter thermautotrophicus (strain ATCC 29096 / DSM 1053 / JCM 10044 / NBRC 100330 / Delta H) (Methanobacterium thermoautotrophicum).